Reading from the N-terminus, the 145-residue chain is uncharacterized protein (145 aa).

The disordered stretch occupies residues 71–95 (GARGRGRTYTKGGSSRSPASWAEQG).

This is an uncharacterized protein from Homo sapiens (Human).